The following is a 426-amino-acid chain: Branched-chain amino acid permease BrnQ (426 aa).

The next 12 membrane-spanning stretches (helical) occupy residues 11–31 (LMLF…MLGL), 41–61 (ILGF…AVVL), 76–96 (IFGL…YALP), 111–131 (NALY…ALSW), 140–160 (LGKW…VLSV), 186–206 (GYMT…ISAF), 219–239 (VVSA…LGSI), 268–288 (IMFV…LISA), 296–316 (LLPG…SFGV), 324–344 (VLAV…TLVF), 358–378 (TYLF…IPAL), and 390–410 (MSLG…AIDW).

Belongs to the branched chain amino acid transporter family.

It localises to the cell membrane. Functionally, branched chain amino acid transport system, which transports isoleucine. The sequence is that of Branched-chain amino acid permease BrnQ from Corynebacterium glutamicum (strain ATCC 13032 / DSM 20300 / JCM 1318 / BCRC 11384 / CCUG 27702 / LMG 3730 / NBRC 12168 / NCIMB 10025 / NRRL B-2784 / 534).